A 356-amino-acid chain; its full sequence is MQFTALLAALGAPLALAASIPAAAHNHSMIDVQLAATGNSMIKATITNTGDRTLNLLKFNTIMDEHPTRKVMVYQDGAEVQFTGMLPRYKMSDLTPEYFVNLGPKASVEHSFDLAATHDLSRGGKIVVKAHGMVPTAEENATTITGHTLYESNELTMDVDGKQAAAVEQAMGGDDSTGVIDKRSNIVTSSCRGSQLRVLQTALSNSARLSRAAASAAQRNPSKMREYFKTADSRTVQKVASRFLSVARESSSGSTGRTTYYCNDNRGGCHPGVLAYTLPSKNQVFNCPSYYQLPALNNRCHGQDQATTTLHELTHNPAVVTPFCEDLGYGYQRVSALPASKAIQNADTYSLFANGM.

Residues 1–17 (MQFTALLAALGAPLALA) form the signal peptide. Positions 18-183 (ASIPAAAHNH…DDSTGVIDKR (166 aa)) are excised as a propeptide. 2 cysteine pairs are disulfide-bonded: Cys191-Cys262 and Cys269-Cys287. A Zn(2+)-binding site is contributed by His311. Residue Glu312 is part of the active site. His315 and Asp326 together coordinate Zn(2+).

The protein belongs to the peptidase M35 family. It depends on Zn(2+) as a cofactor.

The protein resides in the secreted. It carries out the reaction Preferential cleavage of bonds with hydrophobic residues in P1'. Also 3-Asn-|-Gln-4 and 8-Gly-|-Ser-9 bonds in insulin B chain.. Probable secreted metalloprotease that shows high activities on basic nuclear substrates such as histone and protamine. May be involved in virulence. The polypeptide is Probable neutral protease 2 homolog TRV_06370 (Trichophyton verrucosum (strain HKI 0517)).